We begin with the raw amino-acid sequence, 536 residues long: Light-independent protochlorophyllide reductase subunit B (536 aa).

Asp36 is a [4Fe-4S] cluster binding site. The Proton donor role is filled by Asp274. 409–410 (GL) contributes to the substrate binding site. Positions 426–448 (DEAGPSHHGGKAVPASAPRADEA) are disordered.

It belongs to the ChlB/BchB/BchZ family. Protochlorophyllide reductase is composed of three subunits; BchL, BchN and BchB. Forms a heterotetramer of two BchB and two BchN subunits. [4Fe-4S] cluster serves as cofactor.

It carries out the reaction chlorophyllide a + oxidized 2[4Fe-4S]-[ferredoxin] + 2 ADP + 2 phosphate = protochlorophyllide a + reduced 2[4Fe-4S]-[ferredoxin] + 2 ATP + 2 H2O. It participates in porphyrin-containing compound metabolism; bacteriochlorophyll biosynthesis (light-independent). Component of the dark-operative protochlorophyllide reductase (DPOR) that uses Mg-ATP and reduced ferredoxin to reduce ring D of protochlorophyllide (Pchlide) to form chlorophyllide a (Chlide). This reaction is light-independent. The NB-protein (BchN-BchB) is the catalytic component of the complex. The chain is Light-independent protochlorophyllide reductase subunit B from Cereibacter sphaeroides (strain KD131 / KCTC 12085) (Rhodobacter sphaeroides).